We begin with the raw amino-acid sequence, 171 residues long: MPLLDSFTVDHTRMEAPAVRVAKTMNTPHGDTITVFDLRFCVPNKEVMPEKGIHTLEHLFAGFMRDHLNGNGVEIIDISPMGCRTGFYMSLIGQPDEQRVADAWKAAMQDVLKVKAQNQIPELNVYQCGTYEMHSLEEAQEIARHIIERGVGVNSNDALALPKEKLQELHL.

Fe cation contacts are provided by His-54, His-58, and Cys-128.

This sequence belongs to the LuxS family. As to quaternary structure, homodimer. Requires Fe cation as cofactor.

It catalyses the reaction S-(5-deoxy-D-ribos-5-yl)-L-homocysteine = (S)-4,5-dihydroxypentane-2,3-dione + L-homocysteine. In terms of biological role, involved in the synthesis of autoinducer 2 (AI-2) which is secreted by bacteria and is used to communicate both the cell density and the metabolic potential of the environment. The regulation of gene expression in response to changes in cell density is called quorum sensing. Catalyzes the transformation of S-ribosylhomocysteine (RHC) to homocysteine (HC) and 4,5-dihydroxy-2,3-pentadione (DPD). The chain is S-ribosylhomocysteine lyase from Cronobacter sakazakii (strain ATCC BAA-894) (Enterobacter sakazakii).